Reading from the N-terminus, the 178-residue chain is Ribosome maturation factor RimM (178 aa).

Residues 100 to 173 (ADEYFIHQLY…QIVVRLLPGL (74 aa)) enclose the PRC barrel domain.

This sequence belongs to the RimM family. In terms of assembly, binds ribosomal protein uS19.

It is found in the cytoplasm. Functionally, an accessory protein needed during the final step in the assembly of 30S ribosomal subunit, possibly for assembly of the head region. Essential for efficient processing of 16S rRNA. May be needed both before and after RbfA during the maturation of 16S rRNA. It has affinity for free ribosomal 30S subunits but not for 70S ribosomes. The chain is Ribosome maturation factor RimM from Roseiflexus castenholzii (strain DSM 13941 / HLO8).